We begin with the raw amino-acid sequence, 104 residues long: Large ribosomal subunit protein bL21 (104 aa).

The protein belongs to the bacterial ribosomal protein bL21 family. As to quaternary structure, part of the 50S ribosomal subunit. Contacts protein L20.

In terms of biological role, this protein binds to 23S rRNA in the presence of protein L20. This chain is Large ribosomal subunit protein bL21, found in Caldanaerobacter subterraneus subsp. tengcongensis (strain DSM 15242 / JCM 11007 / NBRC 100824 / MB4) (Thermoanaerobacter tengcongensis).